The chain runs to 784 residues: 5-methyltetrahydropteroyltriglutamate--homocysteine methyltransferase (784 aa).

5-methyltetrahydropteroyltri-L-glutamate is bound by residues 16-19 (RELK) and Lys112. L-homocysteine contacts are provided by residues 460 to 462 (IGS) and Glu513. L-methionine is bound by residues 460 to 462 (IGS) and Glu513. 5-methyltetrahydropteroyltri-L-glutamate is bound at residue Trp590. Asp628 is an L-homocysteine binding site. Asp628 is an L-methionine binding site. Glu634 lines the 5-methyltetrahydropteroyltri-L-glutamate pocket. Residues His670, Cys672, and Glu694 each contribute to the Zn(2+) site. The active-site Proton donor is His723. Residue Cys755 participates in Zn(2+) binding.

Belongs to the vitamin-B12 independent methionine synthase family. Zn(2+) is required as a cofactor.

The enzyme catalyses 5-methyltetrahydropteroyltri-L-glutamate + L-homocysteine = tetrahydropteroyltri-L-glutamate + L-methionine. It functions in the pathway amino-acid biosynthesis; L-methionine biosynthesis via de novo pathway; L-methionine from L-homocysteine (MetE route): step 1/1. Its function is as follows. Catalyzes the transfer of a methyl group from 5-methyltetrahydrofolate to homocysteine resulting in methionine formation. The polypeptide is 5-methyltetrahydropteroyltriglutamate--homocysteine methyltransferase (Acidithiobacillus ferrooxidans (strain ATCC 23270 / DSM 14882 / CIP 104768 / NCIMB 8455) (Ferrobacillus ferrooxidans (strain ATCC 23270))).